The primary structure comprises 320 residues: 4-hydroxythreonine-4-phosphate dehydrogenase (320 aa).

Thr132 contributes to the substrate binding site. His161, His205, and His258 together coordinate a divalent metal cation. The substrate site is built by Lys266, Asn275, and Arg284.

This sequence belongs to the PdxA family. Homodimer. A divalent metal cation is required as a cofactor.

It localises to the cytoplasm. It carries out the reaction 4-(phosphooxy)-L-threonine + NAD(+) = 3-amino-2-oxopropyl phosphate + CO2 + NADH. The protein operates within cofactor biosynthesis; pyridoxine 5'-phosphate biosynthesis; pyridoxine 5'-phosphate from D-erythrose 4-phosphate: step 4/5. In terms of biological role, catalyzes the NAD(P)-dependent oxidation of 4-(phosphooxy)-L-threonine (HTP) into 2-amino-3-oxo-4-(phosphooxy)butyric acid which spontaneously decarboxylates to form 3-amino-2-oxopropyl phosphate (AHAP). In Aquifex aeolicus (strain VF5), this protein is 4-hydroxythreonine-4-phosphate dehydrogenase.